A 198-amino-acid chain; its full sequence is NAD(P)H dehydrogenase (quinone) (198 aa).

Positions 6–190 (ILVLYYSRHG…LCRALGKRLA (185 aa)) constitute a Flavodoxin-like domain. FMN-binding positions include 12-17 (SRHGAT), 79-81 (TRF), 114-120 (STASLHG), and His135.

This sequence belongs to the WrbA family. Homodimer. The cofactor is FMN.

It catalyses the reaction a quinone + NADH + H(+) = a quinol + NAD(+). It carries out the reaction a quinone + NADPH + H(+) = a quinol + NADP(+). The sequence is that of NAD(P)H dehydrogenase (quinone) from Pseudomonas aeruginosa (strain ATCC 15692 / DSM 22644 / CIP 104116 / JCM 14847 / LMG 12228 / 1C / PRS 101 / PAO1).